A 208-amino-acid polypeptide reads, in one-letter code: NADH-ubiquinone oxidoreductase chain 4 (208 aa).

A run of 6 helical transmembrane segments spans residues 23–43, 60–80, 93–113, 114–134, 147–167, and 188–208; these read VWIN…VTLW, SLSS…LLAS, KMYI…FSAN, ELIM…IIIT, LYFL…LISI, and PTWS…IKMP.

Belongs to the complex I subunit 4 family. In terms of assembly, core subunit of respiratory chain NADH dehydrogenase (Complex I) which is composed of 45 different subunits.

The protein localises to the mitochondrion inner membrane. It catalyses the reaction a ubiquinone + NADH + 5 H(+)(in) = a ubiquinol + NAD(+) + 4 H(+)(out). Its function is as follows. Core subunit of the mitochondrial membrane respiratory chain NADH dehydrogenase (Complex I) which catalyzes electron transfer from NADH through the respiratory chain, using ubiquinone as an electron acceptor. Essential for the catalytic activity and assembly of complex I. This Phodopus sungorus (Striped hairy-footed hamster) protein is NADH-ubiquinone oxidoreductase chain 4 (MT-ND4).